Reading from the N-terminus, the 75-residue chain is Carwaprin-a (75 aa).

The N-terminal stretch at 1–24 is a signal peptide; that stretch reads MSSGGLLLLLGLLTLWAELTPISG. A WAP domain is found at 27-72; sequence RPKKPGLCPPRPQKPPCVRECKNDWRCPGEQKCCRYGCIYECRDPI. 4 cysteine pairs are disulfide-bonded: C34–C60, C43–C64, C47–C59, and C53–C68.

Belongs to the venom waprin family. As to expression, expressed by the venom gland.

It is found in the secreted. Functionally, damages membranes of susceptible bacteria. Has no hemolytic activity. Not toxic to mice. Does not inhibit the proteinases elastase and cathepsin G. The chain is Carwaprin-a from Tropidechis carinatus (Australian rough-scaled snake).